A 455-amino-acid chain; its full sequence is Ribulose bisphosphate carboxylase large chain (455 aa).

Lys-5 is modified (N6,N6,N6-trimethyllysine). Asn-114 and Thr-164 together coordinate substrate. Lys-166 (proton acceptor) is an active-site residue. Lys-168 serves as a coordination point for substrate. Residues Lys-192, Asp-194, and Glu-195 each coordinate Mg(2+). Lys-192 carries the N6-carboxylysine modification. The active-site Proton acceptor is the His-285. The substrate site is built by Arg-286, His-318, and Ser-370.

Belongs to the RuBisCO large chain family. Type I subfamily. Heterohexadecamer of 8 large chains and 8 small chains; disulfide-linked. The disulfide link is formed within the large subunit homodimers. Mg(2+) serves as cofactor. The disulfide bond which can form in the large chain dimeric partners within the hexadecamer appears to be associated with oxidative stress and protein turnover.

The protein localises to the plastid. It localises to the chloroplast. It carries out the reaction 2 (2R)-3-phosphoglycerate + 2 H(+) = D-ribulose 1,5-bisphosphate + CO2 + H2O. It catalyses the reaction D-ribulose 1,5-bisphosphate + O2 = 2-phosphoglycolate + (2R)-3-phosphoglycerate + 2 H(+). RuBisCO catalyzes two reactions: the carboxylation of D-ribulose 1,5-bisphosphate, the primary event in carbon dioxide fixation, as well as the oxidative fragmentation of the pentose substrate in the photorespiration process. Both reactions occur simultaneously and in competition at the same active site. The chain is Ribulose bisphosphate carboxylase large chain from Lupinus arcticus (Arctic lupine).